Here is a 381-residue protein sequence, read N- to C-terminus: MKLLARTLYLWEVGRQVASWSLTSGQECLVLRETWWASMRAVRTRAVHHKPGHCIAMGRIMRPDDANVAGNVHGGTILKMIEEAGVIISTRHCNSQNGERCVAALARVERTDFLSPMCIGEVAHVSAEITYTSKHSVEVQVHVLSENILTGTKKLTNKATLWYVPLSLKNVDKVLEVPPIVYLRQEQEEEGRKRYEAQKLERMETKWRNGDIVQPILNPEPNTVSYSQSSLIHLVGPSDCTLHGFVHGGVTMKLMDEVAGIVAARHCKTNIVTASVDAINFHDKIRKGCVITISGRMTFTSNKSMEIEVLVDADPVVDNSQKRYRAASAFFTYVSLNQEGKPLPVPQLVPETEDEKKRFEEGKGRYLQMKAKRQGHTEPQP.

One can recognise a HotDog ACOT-type 1 domain in the interval 51–169 (PGHCIAMGRI…TLWYVPLSLK (119 aa)). Asparagine 67 is an active-site residue. Lysine 169 and lysine 199 each carry N6-acetyllysine. A HotDog ACOT-type 2 domain is found at 225-339 (SYSQSSLIHL…FFTYVSLNQE (115 aa)). Residue aspartate 256 is part of the active site. An N6-acetyllysine modification is found at lysine 284. A disordered region spans residues 343 to 381 (LPVPQLVPETEDEKKRFEEGKGRYLQMKAKRQGHTEPQP). Basic and acidic residues predominate over residues 354-364 (DEKKRFEEGKG).

Homohexamer. The N-terminus is blocked. Isoform 1 is expressed constitutively in brain and testis. Isoform 2 is induced in liver by treatment with the peroxisome proliferator.

It is found in the cytoplasm. Its subcellular location is the cytosol. It catalyses the reaction hexadecanoyl-CoA + H2O = hexadecanoate + CoA + H(+). It carries out the reaction dodecanoyl-CoA + H2O = dodecanoate + CoA + H(+). The catalysed reaction is tetradecanoyl-CoA + H2O = tetradecanoate + CoA + H(+). The enzyme catalyses decanoyl-CoA + H2O = decanoate + CoA + H(+). It catalyses the reaction octanoyl-CoA + H2O = octanoate + CoA + H(+). It carries out the reaction octadecanoyl-CoA + H2O = octadecanoate + CoA + H(+). The catalysed reaction is (9Z)-octadecenoyl-CoA + H2O = (9Z)-octadecenoate + CoA + H(+). The protein operates within lipid metabolism; fatty acid metabolism. In terms of biological role, catalyzes the hydrolysis of acyl-CoAs into free fatty acids and coenzyme A (CoASH), regulating their respective intracellular levels. Preferentially hydrolyzes palmitoyl-CoA, but has a broad specificity acting on other fatty acyl-CoAs with chain-lengths of C8-C18. May play an important physiological function in brain. This is Cytosolic acyl coenzyme A thioester hydrolase (Acot7) from Rattus norvegicus (Rat).